A 541-amino-acid chain; its full sequence is Carboxypeptidase Y homolog A (541 aa).

The signal sequence occupies residues 1-17 (MKVATSALLIGAAAAQQ). A propeptide spanning residues 18–125 (QQILKFPDSF…KLEQYSLRAK (108 aa)) is cleaved from the precursor. 5 disulfide bridges follow: Cys179–Cys418, Cys313–Cys327, Cys337–Cys360, Cys344–Cys353, and Cys382–Cys388. N-linked (GlcNAc...) asparagine glycosylation occurs at Asn210. Ser266 is an active-site residue. The active site involves Asp457. Asn505 carries an N-linked (GlcNAc...) asparagine glycan. His516 is an active-site residue.

This sequence belongs to the peptidase S10 family.

It is found in the vacuole. It catalyses the reaction Release of a C-terminal amino acid with broad specificity.. Functionally, vacuolar carboxypeptidase involved in degradation of small peptides. Digests preferentially peptides containing an aliphatic or hydrophobic residue in P1' position, as well as methionine, leucine or phenylalanine in P1 position of ester substrate. The sequence is that of Carboxypeptidase Y homolog A (cpyA) from Pyrenophora tritici-repentis (strain Pt-1C-BFP) (Wheat tan spot fungus).